The chain runs to 523 residues: GMP synthase [glutamine-hydrolyzing] (523 aa).

The region spanning 8–205 (KILILDFGSQ…VVDICGCETN (198 aa)) is the Glutamine amidotransferase type-1 domain. Cysteine 85 functions as the Nucleophile in the catalytic mechanism. Active-site residues include histidine 179 and glutamate 181. Residues 206 to 398 (WTAENIIEDA…LGLPAEMLNR (193 aa)) form the GMPS ATP-PPase domain. 233–239 (SGGVDSS) contacts ATP.

As to quaternary structure, homodimer.

It catalyses the reaction XMP + L-glutamine + ATP + H2O = GMP + L-glutamate + AMP + diphosphate + 2 H(+). Its pathway is purine metabolism; GMP biosynthesis; GMP from XMP (L-Gln route): step 1/1. Its function is as follows. Catalyzes the synthesis of GMP from XMP. The protein is GMP synthase [glutamine-hydrolyzing] of Histophilus somni (strain 2336) (Haemophilus somnus).